A 380-amino-acid polypeptide reads, in one-letter code: Protein neprosin (380 aa).

A signal peptide spans 1-24 (MQAKFFTFVILSSVFYFNYPLAEA). The propeptide at 25-128 (RSIQARLANK…QFPNLKFAPP (104 aa)) is activation peptide. Residues cysteine 52 and cysteine 98 are joined by a disulfide bond. Residues asparagine 68, asparagine 145, and asparagine 152 are each glycosylated (N-linked (GlcNAc...) asparagine). Residues 129–380 (SANTNHQYAV…YLFYGGPGCQ (252 aa)) form the Neprosin PEP catalytic domain. Residue glutamate 188 is part of the active site. Cysteine 219 and cysteine 224 form a disulfide bridge. Asparagine 253 carries N-linked (GlcNAc...) asparagine glycosylation. Glutamate 297 is a catalytic residue. The cysteines at positions 358 and 379 are disulfide-linked.

It belongs to the peptidase G3 family.

It localises to the secreted. The enzyme catalyses Hydrolysis of Pro-|-Xaa &gt;&gt; Ala-|-Xaa in oligopeptides.. With respect to regulation, weakly inhibited by the aspartic protease inhibitor pepstatin. Weakly inhibited by pepstatin A (IC(50) of 140 uM) and 1,2-epoxy-3-(p-nitrophenoxy)propane (EPNP) (IC(50) of 480 uM). Activity is not affected by the POP inhibitor Z-Pro-prolinal inhibitor or the denaturant urea. Its function is as follows. Glutamic endopeptidase that preferentially cleaves peptide bonds on the C-terminal side of proline residues. Also cleaves peptide bonds on the C-terminal side of alanine residues but with less efficiency. In contrast to most proline-cleaving enzymes, effectively degrades proteins of any size. Found in the viscoelastic fluid of the pitcher, and so likely functions in the digestion of their prey. This Nepenthes x ventrata (Red tropical pitcher plant) protein is Protein neprosin.